Consider the following 525-residue polypeptide: Light-independent protochlorophyllide reductase subunit B (525 aa).

Residue aspartate 36 participates in [4Fe-4S] cluster binding. Catalysis depends on aspartate 286, which acts as the Proton donor. A substrate-binding site is contributed by 421–422 (GL).

The protein belongs to the ChlB/BchB/BchZ family. In terms of assembly, protochlorophyllide reductase is composed of three subunits; ChlL, ChlN and ChlB. Forms a heterotetramer of two ChlB and two ChlN subunits. It depends on [4Fe-4S] cluster as a cofactor.

The enzyme catalyses chlorophyllide a + oxidized 2[4Fe-4S]-[ferredoxin] + 2 ADP + 2 phosphate = protochlorophyllide a + reduced 2[4Fe-4S]-[ferredoxin] + 2 ATP + 2 H2O. It participates in porphyrin-containing compound metabolism; chlorophyll biosynthesis (light-independent). Component of the dark-operative protochlorophyllide reductase (DPOR) that uses Mg-ATP and reduced ferredoxin to reduce ring D of protochlorophyllide (Pchlide) to form chlorophyllide a (Chlide). This reaction is light-independent. The NB-protein (ChlN-ChlB) is the catalytic component of the complex. This chain is Light-independent protochlorophyllide reductase subunit B, found in Prochlorococcus marinus (strain NATL2A).